Here is a 159-residue protein sequence, read N- to C-terminus: Cyclic pyranopterin monophosphate synthase (159 aa).

Substrate-binding positions include 75–77 and 113–114; these read LCH and ME. The active site involves Asp128.

This sequence belongs to the MoaC family. Homohexamer; trimer of dimers.

The enzyme catalyses (8S)-3',8-cyclo-7,8-dihydroguanosine 5'-triphosphate = cyclic pyranopterin phosphate + diphosphate. It participates in cofactor biosynthesis; molybdopterin biosynthesis. Catalyzes the conversion of (8S)-3',8-cyclo-7,8-dihydroguanosine 5'-triphosphate to cyclic pyranopterin monophosphate (cPMP). This chain is Cyclic pyranopterin monophosphate synthase, found in Cupriavidus necator (strain ATCC 17699 / DSM 428 / KCTC 22496 / NCIMB 10442 / H16 / Stanier 337) (Ralstonia eutropha).